The chain runs to 79 residues: ATP synthase subunit c (79 aa).

2 consecutive transmembrane segments (helical) span residues 11 to 31 and 53 to 73; these read IAVA…IGIL and FFVV…LGLY.

Belongs to the ATPase C chain family. In terms of assembly, F-type ATPases have 2 components, F(1) - the catalytic core - and F(0) - the membrane proton channel. F(1) has five subunits: alpha(3), beta(3), gamma(1), delta(1), epsilon(1). F(0) has three main subunits: a(1), b(2) and c(10-14). The alpha and beta chains form an alternating ring which encloses part of the gamma chain. F(1) is attached to F(0) by a central stalk formed by the gamma and epsilon chains, while a peripheral stalk is formed by the delta and b chains.

It localises to the cell membrane. Its function is as follows. F(1)F(0) ATP synthase produces ATP from ADP in the presence of a proton or sodium gradient. F-type ATPases consist of two structural domains, F(1) containing the extramembraneous catalytic core and F(0) containing the membrane proton channel, linked together by a central stalk and a peripheral stalk. During catalysis, ATP synthesis in the catalytic domain of F(1) is coupled via a rotary mechanism of the central stalk subunits to proton translocation. Functionally, key component of the F(0) channel; it plays a direct role in translocation across the membrane. A homomeric c-ring of between 10-14 subunits forms the central stalk rotor element with the F(1) delta and epsilon subunits. This is ATP synthase subunit c from Buchnera aphidicola subsp. Schizaphis graminum (strain Sg).